Consider the following 98-residue polypeptide: NADH-ubiquinone oxidoreductase chain 4L (98 aa).

A run of 3 helical transmembrane segments spans residues 1–21 (MSLIHINILMAFTMSLVGLLM), 29–49 (ALLCLEGMVLSLFILMTLTIL), and 61–81 (IILLVFAACEAAIGLALLVMV).

This sequence belongs to the complex I subunit 4L family. Core subunit of respiratory chain NADH dehydrogenase (Complex I) which is composed of 45 different subunits.

It is found in the mitochondrion inner membrane. It carries out the reaction a ubiquinone + NADH + 5 H(+)(in) = a ubiquinol + NAD(+) + 4 H(+)(out). Functionally, core subunit of the mitochondrial membrane respiratory chain NADH dehydrogenase (Complex I) which catalyzes electron transfer from NADH through the respiratory chain, using ubiquinone as an electron acceptor. Part of the enzyme membrane arm which is embedded in the lipid bilayer and involved in proton translocation. This chain is NADH-ubiquinone oxidoreductase chain 4L (MT-ND4L), found in Phocoena phocoena (Harbor porpoise).